The chain runs to 286 residues: Sulfate transport system permease protein CysW (286 aa).

The next 6 helical transmembrane spans lie at leucine 20–proline 40, leucine 74–isoleucine 94, valine 108–tyrosine 128, isoleucine 145–alanine 165, leucine 207–valine 227, and tyrosine 255–leucine 275. An ABC transmembrane type-1 domain is found at isoleucine 69 to lysine 272.

This sequence belongs to the binding-protein-dependent transport system permease family. CysTW subfamily. The complex is composed of two ATP-binding proteins (CysA), two transmembrane proteins (CysT and CysW) and a solute-binding protein (CysP).

Its subcellular location is the cell inner membrane. Functionally, part of the ABC transporter complex CysAWTP (TC 3.A.1.6.1) involved in sulfate/thiosulfate import. Probably responsible for the translocation of the substrate across the membrane. This Synechococcus elongatus (strain ATCC 33912 / PCC 7942 / FACHB-805) (Anacystis nidulans R2) protein is Sulfate transport system permease protein CysW (cysW).